Here is a 322-residue protein sequence, read N- to C-terminus: FAD-dependent monooxygenase subE (322 aa).

The FAD site is built by glutamate 35, glycine 49, arginine 108, and aspartate 313.

The protein belongs to the paxM FAD-dependent monooxygenase family. It depends on FAD as a cofactor.

The protein operates within secondary metabolite biosynthesis; terpenoid biosynthesis. Its function is as follows. FAD-dependent monooxygenase; part of the gene cluster that mediates the biosynthesis of the immunosuppressants subglutinols, meroterpenoids consisting of an alpha-pyrone (4-hydroxy-5,6-dimethyl-2-pyrone) moiety attached to a decalin core fused to a five-membered cyclic ether carrying a prenylside chain. The first step of the pathway is the synthesis of the alpha-pyrone moiety by the polyketide synthase subA via condensation of one acetyl-CoA starter unit with 3 malonyl-CoA units and 2 methylations. The alpha-pyrone is then combined with geranylgeranyl pyrophosphate (GGPP) formed by the GGPP synthase subD through the action of the prenyltransferase subC to yield a linear alpha-pyrone diterpenoid. Subsequent steps in the subglutinol biosynthetic pathway involve the decalin core formation, which is thought to be initiated by the epoxidation of the C10-C11 olefin by the FAD-dependent oxidoreductase subE. The following cyclization cascade would be catalyzed by the terpene cyclase subB. Lastly, the FAD-dependent dehydrogenase subF probably catalyzes the five-membered cyclic ether formation to complete the formation of subglutinol A. Subsequent redox reactions appear to give rise to subglutinol C and D, however, it remains unclear which enzymes are responsible for these transformations. SubD may have secondary function in the conversion of the identified subglutinols to subglutinol analog 45, which seems to be the major product of the cluster. The protein is FAD-dependent monooxygenase subE of Metarhizium robertsii (strain ARSEF 23 / ATCC MYA-3075) (Metarhizium anisopliae (strain ARSEF 23)).